The primary structure comprises 159 residues: 2-C-methyl-D-erythritol 2,4-cyclodiphosphate synthase (159 aa).

2 residues coordinate a divalent metal cation: D8 and H10. 4-CDP-2-C-methyl-D-erythritol 2-phosphate is bound by residues 8–10 (DVH) and 34–35 (HS). Position 42 (H42) interacts with a divalent metal cation. 4-CDP-2-C-methyl-D-erythritol 2-phosphate contacts are provided by residues 56-58 (DIG), 61-65 (FPDTD), 100-106 (AQAPKML), 132-135 (TTTE), F139, and R142.

This sequence belongs to the IspF family. Homotrimer. The cofactor is a divalent metal cation.

The catalysed reaction is 4-CDP-2-C-methyl-D-erythritol 2-phosphate = 2-C-methyl-D-erythritol 2,4-cyclic diphosphate + CMP. The protein operates within isoprenoid biosynthesis; isopentenyl diphosphate biosynthesis via DXP pathway; isopentenyl diphosphate from 1-deoxy-D-xylulose 5-phosphate: step 4/6. Involved in the biosynthesis of isopentenyl diphosphate (IPP) and dimethylallyl diphosphate (DMAPP), two major building blocks of isoprenoid compounds. Catalyzes the conversion of 4-diphosphocytidyl-2-C-methyl-D-erythritol 2-phosphate (CDP-ME2P) to 2-C-methyl-D-erythritol 2,4-cyclodiphosphate (ME-CPP) with a corresponding release of cytidine 5-monophosphate (CMP). This is 2-C-methyl-D-erythritol 2,4-cyclodiphosphate synthase from Klebsiella pneumoniae (strain 342).